The following is a 734-amino-acid chain: MQRSEGGSETPSTVALRTSTSAQAPVVQPVPASQQRVLVQATGSSQKGAQVQQLPVPRVQQVPQQVQQVQHYHSQQVQYVEGAEAVYPNGTIRAAYSYNPESQLYGQGSGSAYFDSQAGGAQVTTVVSSGGVPTHGMVGIAMDVGGSQIISSGSAYLIHGGMEGGRHHTSHSSRSSSAMLEMAIENLQKSEGIATHKSSLLNSHLQWLLDNYETAEGVSLPRSSLYNHYLRHCQEQKLDPVNAASFGKLIRSVFMGLRTRRLGTRGNSKYHYYGIRLKPDSPLNRMQEDTQYMAMRQTPVHQKQRFKPFHKMDGMGDSLNSGSQHLSSTPEQSVAAQCQHHQQYIDVSHVLPPFPSLDLGSCPLPESISMTDVKKLQSSYRIHCEATLDVVMNLQFHLIEKLWQTFWHSTAPSSDGATTIPNSEEDVEDIRGFPRDKLITLCKYEPIKQWMRSCDHILYQALVEILIPDVLRPVPSTLTQAIRNFAKSLEGWLTSAMTNFPPEIISTKAAVVSAFAQTLRRYTSLNHLAQAARAVLQNTSQINQMLSDLNRVDFANVQEQASWVCQCDESVVQRLELDFKATLQQQSSLDQWAAWLDNVVNQVLKPYDGSLSFPRAARQFLLKWSFYSSMVIRDLTLRSAASFGSFHLIRLLYDEYMFYLVEHRVAQATGETPIAVMGEFSDLSSLMPSLKEQDTSFSDDMTSDGDMSRMSERSLTEPAVKRERIEIPHSLQEI.

The segment covering 1–23 has biased composition (polar residues); the sequence is MQRSEGGSETPSTVALRTSTSAQ. The interval 1 to 31 is disordered; that stretch reads MQRSEGGSETPSTVALRTSTSAQAPVVQPVP. Positions 204–279 form a DNA-binding region, RFX-type winged-helix; that stretch reads HLQWLLDNYE…YHYYGIRLKP (76 aa). Residues 694-722 are disordered; that stretch reads DTSFSDDMTSDGDMSRMSERSLTEPAVKR. Residues 706 to 722 show a composition bias toward basic and acidic residues; the sequence is DMSRMSERSLTEPAVKR.

Belongs to the RFX family. Homodimer. Heterodimer; heterodimerizes with other rfx proteins.

The protein localises to the nucleus. Its subcellular location is the cytoplasm. Transcription factor that acts as a key regulator of ciliogenesis. Specifically regulates expression of genes required for cilium assembly and function. Recognizes and binds the X-box, a regulatory motif with DNA sequence 5'-GTNRCC(0-3N)RGYAAC-3' present on promoters. This is DNA-binding protein RFX2 (rfx2) from Danio rerio (Zebrafish).